We begin with the raw amino-acid sequence, 1407 residues long: Metabotropic glutamate receptor-like protein P (1407 aa).

The Extracellular portion of the chain corresponds to 1-696 (MKFKKKNIYW…KTIKVTSFVK (696 aa)). Asparagine 43 and asparagine 58 each carry an N-linked (GlcNAc...) asparagine glycan. PbH1 repeat units lie at residues 93–118 (ISDI…FDGG) and 129–150 (FVNV…FLYN). N-linked (GlcNAc...) asparagine glycans are attached at residues asparagine 162, asparagine 179, asparagine 182, asparagine 230, asparagine 241, asparagine 270, asparagine 368, asparagine 391, asparagine 464, asparagine 512, asparagine 539, asparagine 544, asparagine 554, asparagine 571, asparagine 627, and asparagine 646. One copy of the PbH1 3 repeat lies at 254-279 (ISNVIFESCEFIGNRANSTGGLSFLT). A PbH1 4 repeat occupies 452 to 476 (GYSVYIENCEVKNNTGLFKGCFIDT). Residues 697–717 (FLVGTLAAILLIILIISGFIS) form a helical membrane-spanning segment. Topologically, residues 718 to 731 (LKYRKKRVIRYSNP) are cytoplasmic. A helical membrane pass occupies residues 732 to 752 (LFLCIILVGCIIFLITIPVLF). The Extracellular segment spans residues 753–758 (GSTSAT). Residues 759 to 779 (CKIRFPIIVIGSCLVTSSVFI) form a helical membrane-spanning segment. The Cytoplasmic segment spans residues 780–806 (KQFRIWRLIKDIQLLRETNVENKYLLK). Residues 807–827 (FISILMVIPIIIVICSFFIFP) form a helical membrane-spanning segment. Residues 828–853 (THEKYTFNQRDITITHYCSDGSYLAY) lie on the Extracellular side of the membrane. Residues 854 to 874 (VIIFLVYQMAILLFGCYLVIV) traverse the membrane as a helical segment. Residues 875 to 890 (CRKFRSIPGTFNEATY) are Cytoplasmic-facing. A helical transmembrane segment spans residues 891 to 911 (IGILIYNYTVVLIVAIPLAYV). Over 912 to 919 (FNKNPLAN) the chain is Extracellular. A helical transmembrane segment spans residues 920–940 (FLIFSISIIVFVLSTIILLFI). Topologically, residues 941 to 1407 (PKFHFLLRKK…LSPINLSKRK (467 aa)) are cytoplasmic. Positions 991–1004 (QQRQGNLYNNNSLG) are enriched in polar residues. Disordered regions lie at residues 991–1072 (QQRQ…DPNF), 1084–1248 (GKRK…SSIG), 1267–1351 (KKVK…NFNE), and 1369–1407 (FHQK…SKRK). Residues 1005-1029 (RSISSNTRKRSNNNINNNNNNNSFN) show a composition bias toward low complexity. Polar residues predominate over residues 1030–1040 (MTGFSDSSSTI). The segment covering 1041–1071 (SNPNLTSFTSSPSSLNSSSDSDSTPDFNDPN) has biased composition (low complexity). The span at 1084–1093 (GKRKSIEKNK) shows a compositional bias: basic and acidic residues. Composition is skewed to low complexity over residues 1099–1147 (PNSP…NTPI), 1154–1246 (SSKT…SDSS), and 1276–1339 (SDST…NNNN). Residues 1315 to 1344 (NNNNNNNNNNNNNINNNNNNANNNNSDTDD) are a coiled coil.

This sequence belongs to the G-protein coupled receptor 3 family. GABA-B receptor subfamily.

It localises to the membrane. The chain is Metabotropic glutamate receptor-like protein P (grlP) from Dictyostelium discoideum (Social amoeba).